The following is a 263-amino-acid chain: Rhomboid-like protease 3 (263 aa).

Helical transmembrane passes span lysine 37–serine 57, valine 86–isoleucine 106, lysine 121–glutamine 141, proline 142–alanine 162, leucine 189–leucine 209, and valine 231–leucine 251. Serine 150 serves as the catalytic Nucleophile. Residue histidine 204 is part of the active site.

The protein belongs to the peptidase S54 family.

Its subcellular location is the membrane. It carries out the reaction Cleaves type-1 transmembrane domains using a catalytic dyad composed of serine and histidine that are contributed by different transmembrane domains.. Functionally, serine protease involved in intramembrane proteolysis and the subsequent release of polypeptides from their membrane anchors. This is Rhomboid-like protease 3 (ROM3) from Toxoplasma gondii.